We begin with the raw amino-acid sequence, 201 residues long: Flavin prenyltransferase UbiX (201 aa).

FMN contacts are provided by residues 23–25 (GAS), Ser49, 103–106 (SIKT), and Arg138. Tyr168 and Lys184 together coordinate dimethylallyl phosphate.

The protein belongs to the UbiX/PAD1 family.

The enzyme catalyses dimethylallyl phosphate + FMNH2 = prenylated FMNH2 + phosphate. Functionally, flavin prenyltransferase that catalyzes the synthesis of the prenylated FMN cofactor (prenyl-FMN) for 4-hydroxy-3-polyprenylbenzoic acid decarboxylase UbiD. The prenyltransferase is metal-independent and links a dimethylallyl moiety from dimethylallyl monophosphate (DMAP) to the flavin N5 and C6 atoms of FMN. This is Flavin prenyltransferase UbiX from Saccharolobus solfataricus (strain ATCC 35092 / DSM 1617 / JCM 11322 / P2) (Sulfolobus solfataricus).